The following is a 100-amino-acid chain: Large ribosomal subunit protein bL27 (100 aa).

The propeptide occupies M1 to F9.

This sequence belongs to the bacterial ribosomal protein bL27 family. The N-terminus is cleaved by ribosomal processing cysteine protease Prp.

The sequence is that of Large ribosomal subunit protein bL27 from Clostridium perfringens (strain ATCC 13124 / DSM 756 / JCM 1290 / NCIMB 6125 / NCTC 8237 / Type A).